A 239-amino-acid chain; its full sequence is Uridylate kinase (239 aa).

ATP is bound at residue 12-15; that stretch reads KLSG. Gly-53 serves as a coordination point for UMP. ATP contacts are provided by Gly-54 and Arg-58. Residues Asp-73 and 135–142 contribute to the UMP site; that span reads TGSPCFTT. ATP is bound by residues Thr-162, Tyr-168, and Asp-171.

It belongs to the UMP kinase family. Homohexamer.

Its subcellular location is the cytoplasm. The catalysed reaction is UMP + ATP = UDP + ADP. It functions in the pathway pyrimidine metabolism; CTP biosynthesis via de novo pathway; UDP from UMP (UMPK route): step 1/1. Inhibited by UTP. In terms of biological role, catalyzes the reversible phosphorylation of UMP to UDP. The protein is Uridylate kinase of Ruthia magnifica subsp. Calyptogena magnifica.